The following is a 429-amino-acid chain: L-dopachrome tautomerase yellow-f (429 aa).

The signal sequence occupies residues 1-23 (MLSLDVLLLCAISGFQLLISADG). N-linked (GlcNAc...) asparagine glycans are attached at residues Asn133 and Asn372.

This sequence belongs to the major royal jelly protein family.

It is found in the secreted. The enzyme catalyses L-dopachrome = 5,6-dihydroxyindole-2-carboxylate. The protein operates within pigment biosynthesis; melanin biosynthesis. Functionally, tautomerization of L-dopachrome with decarboxylation to give 5,6-dihydroxyindole (DHI). Also catalyzes the tautomerization of the methyl ester of L-dopachrome and dopamine chrome. May play a role in melanization reactions during late pupal and adult stages. May play a role in melanization reactions during larval and early pupal stages. The chain is L-dopachrome tautomerase yellow-f from Drosophila melanogaster (Fruit fly).